The following is a 213-amino-acid chain: Probable nicotinate-nucleotide adenylyltransferase (213 aa).

It belongs to the NadD family.

It carries out the reaction nicotinate beta-D-ribonucleotide + ATP + H(+) = deamido-NAD(+) + diphosphate. It participates in cofactor biosynthesis; NAD(+) biosynthesis; deamido-NAD(+) from nicotinate D-ribonucleotide: step 1/1. In terms of biological role, catalyzes the reversible adenylation of nicotinate mononucleotide (NaMN) to nicotinic acid adenine dinucleotide (NaAD). This is Probable nicotinate-nucleotide adenylyltransferase from Trichlorobacter lovleyi (strain ATCC BAA-1151 / DSM 17278 / SZ) (Geobacter lovleyi).